A 343-amino-acid polypeptide reads, in one-letter code: Twinfilin (343 aa).

ADF-H domains follow at residues 4–139 and 177–312; these read QTGI…KHKI and GINC…EELH. Residues 317 to 343 form a disordered region; sequence NLRPQFSKPKGPPSRGAKRLTKPQAVE.

Belongs to the actin-binding proteins ADF family. Twinfilin subfamily. Interacts with G-actin; ADP-actin form.

It is found in the cytoplasm. Its subcellular location is the cytoskeleton. It localises to the cell cortex. Functionally, actin-binding protein involved in motile and morphological processes. Inhibits actin polymerization, likely by sequestering G-actin. This is Twinfilin (twf) from Aedes aegypti (Yellowfever mosquito).